The primary structure comprises 104 residues: Large ribosomal subunit protein bL21 (104 aa).

Belongs to the bacterial ribosomal protein bL21 family. In terms of assembly, part of the 50S ribosomal subunit. Contacts protein L20.

Its function is as follows. This protein binds to 23S rRNA in the presence of protein L20. In Pseudomonas putida (strain GB-1), this protein is Large ribosomal subunit protein bL21.